The sequence spans 125 residues: Ribosome-binding factor A (125 aa).

The protein belongs to the RbfA family. In terms of assembly, monomer. Binds 30S ribosomal subunits, but not 50S ribosomal subunits or 70S ribosomes.

It localises to the cytoplasm. In terms of biological role, one of several proteins that assist in the late maturation steps of the functional core of the 30S ribosomal subunit. Associates with free 30S ribosomal subunits (but not with 30S subunits that are part of 70S ribosomes or polysomes). Required for efficient processing of 16S rRNA. May interact with the 5'-terminal helix region of 16S rRNA. This is Ribosome-binding factor A from Kosmotoga olearia (strain ATCC BAA-1733 / DSM 21960 / TBF 19.5.1).